Here is a 130-residue protein sequence, read N- to C-terminus: Neelaredoxin (130 aa).

Fe cation contacts are provided by glutamate 15, histidine 17, histidine 45, histidine 51, cysteine 115, and histidine 118.

It belongs to the desulfoferrodoxin family. As to quaternary structure, monomer. It depends on Fe cation as a cofactor.

It catalyses the reaction 2 superoxide + 2 H(+) = H2O2 + O2. Non-heme iron protein. The protein is Neelaredoxin (nlr) of Megalodesulfovibrio gigas (Desulfovibrio gigas).